The primary structure comprises 292 residues: Golgi to ER traffic protein 2 (292 aa).

Basic and acidic residues predominate over residues 1–18 (MSELSAEEKRKLLRERRQ). Positions 1-80 (MSELSAEEKR…TPLHDDPEVP (80 aa)) are disordered. Residues 1 to 158 (MSELSAEEKR…SQYHAYEQKQ (158 aa)) are Cytoplasmic-facing. Composition is skewed to polar residues over residues 29 to 47 (RLNN…NVTS) and 55 to 71 (ATTT…QSPT). Residues 159–179 (WKARFLVVRWIIHTLNFVYHY) traverse the membrane as a helical segment. Over 180–205 (IASGYKLSASPYAFVRAQAVDSHVRT) the chain is Lumenal. A helical transmembrane segment spans residues 206-225 (FFTAFLTVEVAVISAYFLVM). Residues 226–268 (SQPKFKDFSRENLVSRILSMASAVVPAVGRYQPLVTRALVYWN) are Cytoplasmic-facing. The helical transmembrane segment at 269–289 (GASIFVGDLMLMVFYFGITSV) threads the bilayer. Residues 290-292 (LGN) lie on the Lumenal side of the membrane.

Belongs to the GET2 family. In terms of assembly, component of the Golgi to ER traffic (GET) complex, which is composed of GET1, GET2 and GET3. Within the complex, GET1 and GET2 form a heterotetramer which is stabilized by phosphatidylinositol binding and which binds to the GET3 homodimer.

It localises to the endoplasmic reticulum membrane. The protein resides in the golgi apparatus membrane. Functionally, required for the post-translational delivery of tail-anchored (TA) proteins to the endoplasmic reticulum. Together with GET1, acts as a membrane receptor for soluble GET3, which recognizes and selectively binds the transmembrane domain of TA proteins in the cytosol. The GET complex cooperates with the HDEL receptor ERD2 to mediate the ATP-dependent retrieval of resident ER proteins that contain a C-terminal H-D-E-L retention signal from the Golgi to the ER. The polypeptide is Golgi to ER traffic protein 2 (Clavispora lusitaniae (strain ATCC 42720) (Yeast)).